The primary structure comprises 452 residues: Bifunctional protein GlmU (452 aa).

The pyrophosphorylase stretch occupies residues 1–224; it reads MNIVILAAGM…EWETHGVNSK (224 aa). Residues 6-9, Lys-20, Gln-71, 76-77, 98-100, Gly-135, Glu-149, Asn-164, and Asn-222 contribute to the UDP-N-acetyl-alpha-D-glucosamine site; these read LAAG, GT, and YGD. A Mg(2+)-binding site is contributed by Asp-100. Residue Asn-222 coordinates Mg(2+). Residues 225–245 are linker; the sequence is VQLAELERIHQRNIAHALLEQ. Residues 246 to 452 form an N-acetyltransferase region; it reads GVTLADPARI…NWQRPVKIKK (207 aa). UDP-N-acetyl-alpha-D-glucosamine is bound by residues Arg-328 and Lys-346. His-358 acts as the Proton acceptor in catalysis. UDP-N-acetyl-alpha-D-glucosamine is bound by residues Tyr-361 and Asn-372. Residues Ala-375, 381-382, Ser-400, Ala-418, and Arg-435 contribute to the acetyl-CoA site; that span reads NY.

In the N-terminal section; belongs to the N-acetylglucosamine-1-phosphate uridyltransferase family. This sequence in the C-terminal section; belongs to the transferase hexapeptide repeat family. In terms of assembly, homotrimer. The cofactor is Mg(2+).

Its subcellular location is the cytoplasm. It carries out the reaction alpha-D-glucosamine 1-phosphate + acetyl-CoA = N-acetyl-alpha-D-glucosamine 1-phosphate + CoA + H(+). The enzyme catalyses N-acetyl-alpha-D-glucosamine 1-phosphate + UTP + H(+) = UDP-N-acetyl-alpha-D-glucosamine + diphosphate. The protein operates within nucleotide-sugar biosynthesis; UDP-N-acetyl-alpha-D-glucosamine biosynthesis; N-acetyl-alpha-D-glucosamine 1-phosphate from alpha-D-glucosamine 6-phosphate (route II): step 2/2. Its pathway is nucleotide-sugar biosynthesis; UDP-N-acetyl-alpha-D-glucosamine biosynthesis; UDP-N-acetyl-alpha-D-glucosamine from N-acetyl-alpha-D-glucosamine 1-phosphate: step 1/1. It functions in the pathway bacterial outer membrane biogenesis; LPS lipid A biosynthesis. Catalyzes the last two sequential reactions in the de novo biosynthetic pathway for UDP-N-acetylglucosamine (UDP-GlcNAc). The C-terminal domain catalyzes the transfer of acetyl group from acetyl coenzyme A to glucosamine-1-phosphate (GlcN-1-P) to produce N-acetylglucosamine-1-phosphate (GlcNAc-1-P), which is converted into UDP-GlcNAc by the transfer of uridine 5-monophosphate (from uridine 5-triphosphate), a reaction catalyzed by the N-terminal domain. This Janthinobacterium sp. (strain Marseille) (Minibacterium massiliensis) protein is Bifunctional protein GlmU.